Reading from the N-terminus, the 504-residue chain is Maturase K (504 aa).

This sequence belongs to the intron maturase 2 family. MatK subfamily.

It is found in the plastid. Its subcellular location is the chloroplast. Its function is as follows. Usually encoded in the trnK tRNA gene intron. Probably assists in splicing its own and other chloroplast group II introns. This Barbarea vulgaris (Yellow rocket) protein is Maturase K.